Reading from the N-terminus, the 93-residue chain is Large ribosomal subunit protein uL23 (93 aa).

Belongs to the universal ribosomal protein uL23 family. Part of the 50S ribosomal subunit. Contacts protein L29, and trigger factor when it is bound to the ribosome.

Its function is as follows. One of the early assembly proteins it binds 23S rRNA. One of the proteins that surrounds the polypeptide exit tunnel on the outside of the ribosome. Forms the main docking site for trigger factor binding to the ribosome. This chain is Large ribosomal subunit protein uL23, found in Aliarcobacter butzleri (strain RM4018) (Arcobacter butzleri).